The chain runs to 417 residues: Serine hydroxymethyltransferase (417 aa).

(6S)-5,6,7,8-tetrahydrofolate contacts are provided by residues L121 and 125–127 (GHL). An N6-(pyridoxal phosphate)lysine modification is found at K229. Residue 355–357 (SPF) coordinates (6S)-5,6,7,8-tetrahydrofolate.

Belongs to the SHMT family. In terms of assembly, homodimer. Pyridoxal 5'-phosphate is required as a cofactor.

Its subcellular location is the cytoplasm. The catalysed reaction is (6R)-5,10-methylene-5,6,7,8-tetrahydrofolate + glycine + H2O = (6S)-5,6,7,8-tetrahydrofolate + L-serine. Its pathway is one-carbon metabolism; tetrahydrofolate interconversion. The protein operates within amino-acid biosynthesis; glycine biosynthesis; glycine from L-serine: step 1/1. In terms of biological role, catalyzes the reversible interconversion of serine and glycine with tetrahydrofolate (THF) serving as the one-carbon carrier. This reaction serves as the major source of one-carbon groups required for the biosynthesis of purines, thymidylate, methionine, and other important biomolecules. Also exhibits THF-independent aldolase activity toward beta-hydroxyamino acids, producing glycine and aldehydes, via a retro-aldol mechanism. This is Serine hydroxymethyltransferase from Sodalis glossinidius (strain morsitans).